The following is a 1166-amino-acid chain: Reverse gyrase 2 (1166 aa).

The RG N-terminal-type zinc-finger motif lies at 1–40 (MINVMYKNSCPNCGGDISGDRLLNGLPCEACLPYINGIDD). Zn(2+)-binding residues include Cys-10, Cys-13, Cys-28, and Cys-31. Residues Gln-92 and 109–116 (APTGLGKT) each bind ATP. The Helicase ATP-binding domain maps to 96-285 (LRRLASNQSF…ALRLLTGFEP (190 aa)). The short motif at 190–193 (DDAD) is the DEAD box element. The topoisomerase I stretch occupies residues 576 to 1166 (FNISTGLLIV…VNPLKSEQNV (591 aa)). The 164-residue stretch at 580–743 (TGLLIVESPT…NVYRVVYHEI (164 aa)) folds into the Toprim domain. Glu-586 is a binding site for Mg(2+). An RG C-terminal-type zinc finger spans residues 662-689 (IKKCLDCNKIFSSASDKCPYCGSANLQS). 4 residues coordinate Zn(2+): Cys-665, Cys-668, Cys-679, and Cys-682. A Mg(2+)-binding site is contributed by Asp-712. Residues 759 to 1157 (NTNLVMSQIV…EIFSEISTLV (399 aa)) form the Topo IA-type catalytic domain. Residue Tyr-903 is the O-(5'-phospho-DNA)-tyrosine intermediate of the active site.

In the N-terminal section; belongs to the DEAD box helicase family. DDVD subfamily. This sequence in the C-terminal section; belongs to the type IA topoisomerase family. In terms of assembly, monomer. It depends on Zn(2+) as a cofactor. The cofactor is Mg(2+).

Its subcellular location is the cytoplasm. It catalyses the reaction ATP + H2O = ADP + phosphate + H(+). Its activity is regulated as follows. At least one of the 2 proteins is inhibited by actinomycin D. Less sensitive to NaCl than TopR1, maximal positive supercoiling is observed with 100 mM NaCl; as NaCl rises higher than 400 mM supercoiling decreases. At 600 mM NaCl relaxes but does not introduce positive supercoils into negatively supercoiled substrate. In terms of biological role, modifies the topological state of DNA by introducing positive supercoils in an ATP-dependent process. A highly processive enzyme, it introduces a large number of positive supercoils directly in a negatively supercoiled substrate. At 75 degrees Celsius introduces more than 23 positive supercoils into pTZ18R DNA (probably 2860 bp), more than TopR1; unlike TopR1 little to no relaxation of the negatively supercoiled substrate is seen in the presence of ATP, in the absence of ATP no activity is seen. At 45 degrees Celsius the enzyme is slower and in vitro individual steps can be detected. It cleaves transiently a single DNA strand and remains covalently bound to the 5' DNA end through a tyrosine residue. May be involved in DNA damage response. May be involved in rewinding the DNA strands in the regions of the chromosome that have opened up to allow transcription or replication. Functionally, there are 2 genes for this protein in the cell. During exponential growth this is the more highly expressed isoform (about 125 molecules per cell at 80 degrees Celsius, about 117 molecules at 88 degrees Celsius); this isoform is less active at higher temperature. Grows actively at both 80 and 88 degrees Celsius; survives a long exposure at 45 degrees Celsius without DNA replication or cell division occurring. Experiments using whole cell extracts do not distinguish which isoform is present, the results are probably a mixture of the two forms. This Saccharolobus solfataricus (strain ATCC 35092 / DSM 1617 / JCM 11322 / P2) (Sulfolobus solfataricus) protein is Reverse gyrase 2.